Reading from the N-terminus, the 180-residue chain is Protein C2-DOMAIN ABA-RELATED 10 (180 aa).

In terms of domain architecture, C2 spans methionine 1–leucine 105. Positions 22, 23, 28, 74, 75, 76, and 82 each coordinate Ca(2+).

Belongs to the plant CAR protein family. Binds to PYR/PYL/RCAR abscisic acid intracellular receptors in an ABA-independent manner, both at the plasma membrane and in the nucleus.

Its subcellular location is the cell membrane. The protein resides in the nucleus. In terms of biological role, stimulates the GTPase/ATPase activities of Obg-like ATPases. Mediates the transient calcium-dependent interaction of PYR/PYL/RCAR abscisic acid (ABA) receptors with the plasma membrane and thus regulates ABA sensitivity. This chain is Protein C2-DOMAIN ABA-RELATED 10, found in Arabidopsis thaliana (Mouse-ear cress).